Consider the following 226-residue polypeptide: Flagellar L-ring protein (226 aa).

Residues 1–15 (MRILGLSAALLILGG) form the signal peptide. A lipid anchor (N-palmitoyl cysteine) is attached at Cys16. Cys16 is lipidated: S-diacylglycerol cysteine.

It belongs to the FlgH family. As to quaternary structure, the basal body constitutes a major portion of the flagellar organelle and consists of four rings (L,P,S, and M) mounted on a central rod.

The protein localises to the cell outer membrane. It localises to the bacterial flagellum basal body. Its function is as follows. Assembles around the rod to form the L-ring and probably protects the motor/basal body from shearing forces during rotation. This Alteromonas mediterranea (strain DSM 17117 / CIP 110805 / LMG 28347 / Deep ecotype) protein is Flagellar L-ring protein.